A 286-amino-acid chain; its full sequence is Putative L-ribulose-5-phosphate 3-epimerase SgbU (286 aa).

The protein belongs to the L-ribulose-5-phosphate 3-epimerase family.

The catalysed reaction is L-ribulose 5-phosphate = L-xylulose 5-phosphate. Functionally, catalyzes the isomerization of L-xylulose-5-phosphate to L-ribulose-5-phosphate (Potential). May be involved in the utilization of 2,3-diketo-L-gulonate. The protein is Putative L-ribulose-5-phosphate 3-epimerase SgbU (sgbU) of Escherichia coli (strain K12).